Here is a 115-residue protein sequence, read N- to C-terminus: uncharacterized protein (115 aa).

A run of 3 helical transmembrane segments spans residues 23–43 (LVYA…LFFA), 63–83 (AMVT…VVMV), and 90–110 (NVVI…YVAA).

The protein localises to the cell membrane. This is an uncharacterized protein from Mycobacterium bovis (strain ATCC BAA-935 / AF2122/97).